Reading from the N-terminus, the 73-residue chain is Sec-independent protein translocase protein TatA (73 aa).

A helical transmembrane segment spans residues 1 to 21; sequence MGSFSIWHWMIVLVIVLLVFG.

The protein belongs to the TatA/E family. As to quaternary structure, the Tat system comprises two distinct complexes: a TatABC complex, containing multiple copies of TatA, TatB and TatC subunits, and a separate TatA complex, containing only TatA subunits. Substrates initially bind to the TatABC complex, which probably triggers association of the separate TatA complex to form the active translocon.

It is found in the cell inner membrane. Part of the twin-arginine translocation (Tat) system that transports large folded proteins containing a characteristic twin-arginine motif in their signal peptide across membranes. TatA could form the protein-conducting channel of the Tat system. The chain is Sec-independent protein translocase protein TatA from Mesorhizobium japonicum (strain LMG 29417 / CECT 9101 / MAFF 303099) (Mesorhizobium loti (strain MAFF 303099)).